A 174-amino-acid chain; its full sequence is Protein TM_1551 (174 aa).

One can recognise an AMMECR1 domain in the interval 2 to 174 (IGEHPYVKWA…IYRFTVERYK (173 aa)).

The polypeptide is Protein TM_1551 (Thermotoga maritima (strain ATCC 43589 / DSM 3109 / JCM 10099 / NBRC 100826 / MSB8)).